A 152-amino-acid chain; its full sequence is Lipoprotein signal peptidase (152 aa).

Transmembrane regions (helical) follow at residues 55 to 75 and 87 to 107; these read NGRW…LYYL and VALG…IATG. Catalysis depends on residues D111 and D129. Residues 125 to 145 form a helical membrane-spanning segment; sequence FNVADICVTVGVGLLFLHLVL.

This sequence belongs to the peptidase A8 family.

The protein resides in the cell membrane. It carries out the reaction Release of signal peptides from bacterial membrane prolipoproteins. Hydrolyzes -Xaa-Yaa-Zaa-|-(S,diacylglyceryl)Cys-, in which Xaa is hydrophobic (preferably Leu), and Yaa (Ala or Ser) and Zaa (Gly or Ala) have small, neutral side chains.. It participates in protein modification; lipoprotein biosynthesis (signal peptide cleavage). Its function is as follows. This protein specifically catalyzes the removal of signal peptides from prolipoproteins. This is Lipoprotein signal peptidase from Symbiobacterium thermophilum (strain DSM 24528 / JCM 14929 / IAM 14863 / T).